The primary structure comprises 544 residues: Chaperonin GroEL (544 aa).

Residues 29–32, 86–90, G413, 476–478, and D492 each bind ATP; these read TLGP, DGTTT, and NAA.

Belongs to the chaperonin (HSP60) family. Forms a cylinder of 14 subunits composed of two heptameric rings stacked back-to-back. Interacts with the co-chaperonin GroES.

It localises to the cytoplasm. The enzyme catalyses ATP + H2O + a folded polypeptide = ADP + phosphate + an unfolded polypeptide.. Together with its co-chaperonin GroES, plays an essential role in assisting protein folding. The GroEL-GroES system forms a nano-cage that allows encapsulation of the non-native substrate proteins and provides a physical environment optimized to promote and accelerate protein folding. This chain is Chaperonin GroEL, found in Bacillus pumilus (strain SAFR-032).